The primary structure comprises 214 residues: Dephospho-CoA kinase (214 aa).

The region spanning 3 to 202 (KIGLTGGIGS…DRWLALAGAA (200 aa)) is the DPCK domain. Position 11-16 (11-16 (GSGKSR)) interacts with ATP.

It belongs to the CoaE family.

The protein localises to the cytoplasm. It carries out the reaction 3'-dephospho-CoA + ATP = ADP + CoA + H(+). It participates in cofactor biosynthesis; coenzyme A biosynthesis; CoA from (R)-pantothenate: step 5/5. Its function is as follows. Catalyzes the phosphorylation of the 3'-hydroxyl group of dephosphocoenzyme A to form coenzyme A. In Bordetella pertussis (strain Tohama I / ATCC BAA-589 / NCTC 13251), this protein is Dephospho-CoA kinase.